A 291-amino-acid polypeptide reads, in one-letter code: MEMO1 family protein PYRAB05390 (291 aa).

The protein belongs to the MEMO1 family.

This Pyrococcus abyssi (strain GE5 / Orsay) protein is MEMO1 family protein PYRAB05390.